Here is a 222-residue protein sequence, read N- to C-terminus: Large ribosomal subunit protein uL4 (222 aa).

A disordered region spans residues 42-100 (AAGRQGTHSTKTRGEVRGGGKKPYRQKGTGRARQGSVRAPQFTGGGTVHGPKPRDYAQR). Residues 60 to 71 (GGKKPYRQKGTG) show a composition bias toward basic residues.

The protein belongs to the universal ribosomal protein uL4 family. In terms of assembly, part of the 50S ribosomal subunit.

One of the primary rRNA binding proteins, this protein initially binds near the 5'-end of the 23S rRNA. It is important during the early stages of 50S assembly. It makes multiple contacts with different domains of the 23S rRNA in the assembled 50S subunit and ribosome. Its function is as follows. Forms part of the polypeptide exit tunnel. In Thermobifida fusca (strain YX), this protein is Large ribosomal subunit protein uL4.